The primary structure comprises 914 residues: Beta-mannosidase A (914 aa).

An N-terminal signal peptide occupies residues 1–20; that stretch reads MRFTATAAALVASSIPATLG. Asn-39, Asn-79, Asn-230, Asn-265, Asn-299, Asn-309, and Asn-330 each carry an N-linked (GlcNAc...) asparagine glycan. Glu-462 acts as the Proton donor in catalysis. N-linked (GlcNAc...) asparagine glycosylation is found at Asn-591, Asn-614, Asn-641, Asn-721, Asn-744, Asn-773, Asn-784, and Asn-909.

Belongs to the glycosyl hydrolase 2 family. Beta-mannosidase A subfamily. In terms of assembly, homodimer.

Its subcellular location is the secreted. The catalysed reaction is Hydrolysis of terminal, non-reducing beta-D-mannose residues in beta-D-mannosides.. Its pathway is glycan metabolism; N-glycan degradation. In terms of biological role, exoglycosidase that cleaves the single beta-linked mannose residue from the non-reducing end of beta-mannosidic oligosaccharides of various complexity and length. Involved in the degradation of polymeric mannan and galactomannan. The sequence is that of Beta-mannosidase A (mndA) from Aspergillus oryzae (strain ATCC 42149 / RIB 40) (Yellow koji mold).